A 203-amino-acid polypeptide reads, in one-letter code: Akirin-2 (203 aa).

A phosphoserine mark is found at Ser18 and Ser21. The Nuclear localization signal signature appears at Pro22 to Cys27. At Ser57 the chain carries Phosphoserine. Positions Pro115–Lys137 are disordered. The span at Leu119 to Pro135 shows a compositional bias: low complexity. The short motif at Ser200–Ser203 is the SYVS motif element.

It belongs to the akirin family. Homodimer. Interacts with IPO9; the interaction is direct. Associates with 20S and 26S proteasomes. Interacts with SMARCD1; promoting SWI/SNF complex recruitment. Interacts with NFKBIZ. Interacts with YWHAB. Polyubiquitinated. Polyubiquitination is dependent of UBR5 that extends pre-ubiquitinated AKIRIN2.

It localises to the nucleus. It is found in the cytoplasm. The protein resides in the membrane. Functionally, molecular adapter that acts as a bridge between a variety of multiprotein complexes, and which is involved in embryonic development, immunity, myogenesis and brain development. Plays a key role in nuclear protein degradation by promoting import of proteasomes into the nucleus: directly binds to fully assembled 20S proteasomes at one end and to nuclear import receptor IPO9 at the other end, bridging them together and mediating the import of pre-assembled proteasome complexes through the nuclear pore. Involved in innate immunity by regulating the production of interleukin-6 (IL6) downstream of Toll-like receptor (TLR): acts by bridging the NF-kappa-B inhibitor NFKBIZ and the SWI/SNF complex, leading to promote induction of IL6. Also involved in adaptive immunity by promoting B-cell activation. Involved in brain development: required for the survival and proliferation of cerebral cortical progenitor cells. Involved in myogenesis: required for skeletal muscle formation and skeletal development, possibly by regulating expression of muscle differentiation factors. The chain is Akirin-2 from Bos taurus (Bovine).